A 427-amino-acid polypeptide reads, in one-letter code: Probable anaerobic glycerol-3-phosphate dehydrogenase subunit B (427 aa).

It belongs to the anaerobic G-3-P dehydrogenase subunit B family. The cofactor is FMN.

It carries out the reaction a quinone + sn-glycerol 3-phosphate = dihydroxyacetone phosphate + a quinol. Its pathway is polyol metabolism; glycerol degradation via glycerol kinase pathway; glycerone phosphate from sn-glycerol 3-phosphate (anaerobic route): step 1/1. The polypeptide is Probable anaerobic glycerol-3-phosphate dehydrogenase subunit B (Halobacterium salinarum (strain ATCC 29341 / DSM 671 / R1)).